We begin with the raw amino-acid sequence, 199 residues long: 7-methyl-GTP pyrophosphatase (199 aa).

D74 (proton acceptor) is an active-site residue.

This sequence belongs to the Maf family. YceF subfamily. A divalent metal cation serves as cofactor.

It localises to the cytoplasm. It catalyses the reaction N(7)-methyl-GTP + H2O = N(7)-methyl-GMP + diphosphate + H(+). Its function is as follows. Nucleoside triphosphate pyrophosphatase that hydrolyzes 7-methyl-GTP (m(7)GTP). May have a dual role in cell division arrest and in preventing the incorporation of modified nucleotides into cellular nucleic acids. This Cupriavidus pinatubonensis (strain JMP 134 / LMG 1197) (Cupriavidus necator (strain JMP 134)) protein is 7-methyl-GTP pyrophosphatase.